The following is a 347-amino-acid chain: Photosystem II protein D1 (347 aa).

The next 3 helical transmembrane spans lie at Tyr-32–Val-49, His-121–Phe-136, and Trp-145–Ala-159. Chlorophyll a is bound at residue His-121. Pheophytin a is bound at residue Tyr-129. The [CaMn4O5] cluster site is built by Asp-173 and Glu-192. Residues Phe-200 to Leu-221 form a helical membrane-spanning segment. His-201 provides a ligand contact to chlorophyll a. A quinone contacts are provided by residues His-218 and Ser-267–Phe-268. Fe cation is bound at residue His-218. His-275 contacts Fe cation. Residues Phe-277 to Leu-291 traverse the membrane as a helical segment. [CaMn4O5] cluster-binding residues include His-335, Glu-336, Asp-345, and Ala-347.

This sequence belongs to the reaction center PufL/M/PsbA/D family. As to quaternary structure, PSII is composed of 1 copy each of membrane proteins PsbA, PsbB, PsbC, PsbD, PsbE, PsbF, PsbH, PsbI, PsbJ, PsbK, PsbL, PsbM, PsbT, PsbX, PsbY, PsbZ, Psb30/Ycf12, at least 3 peripheral proteins of the oxygen-evolving complex and a large number of cofactors. It forms dimeric complexes. The D1/D2 heterodimer binds P680, chlorophylls that are the primary electron donor of PSII, and subsequent electron acceptors. It shares a non-heme iron and each subunit binds pheophytin, quinone, additional chlorophylls, carotenoids and lipids. D1 provides most of the ligands for the Mn4-Ca-O5 cluster of the oxygen-evolving complex (OEC). There is also a Cl(-1) ion associated with D1 and D2, which is required for oxygen evolution. The PSII complex binds additional chlorophylls, carotenoids and specific lipids. serves as cofactor. In terms of processing, tyr-164 forms a radical intermediate that is referred to as redox-active TyrZ, YZ or Y-Z.

It localises to the plastid. The protein resides in the chloroplast thylakoid membrane. It catalyses the reaction 2 a plastoquinone + 4 hnu + 2 H2O = 2 a plastoquinol + O2. Functionally, photosystem II (PSII) is a light-driven water:plastoquinone oxidoreductase that uses light energy to abstract electrons from H(2)O, generating O(2) and a proton gradient subsequently used for ATP formation. It consists of a core antenna complex that captures photons, and an electron transfer chain that converts photonic excitation into a charge separation. The D1/D2 (PsbA/PsbD) reaction center heterodimer binds P680, the primary electron donor of PSII as well as several subsequent electron acceptors. In Heterocapsa niei (Dinoflagellate), this protein is Photosystem II protein D1.